We begin with the raw amino-acid sequence, 543 residues long: Tyrosine-protein kinase Yes (543 aa).

Residues 1-20 are compositionally biased toward basic and acidic residues; that stretch reads MGCIKSKENKSPAIKYRPEN. Residues 1–45 form a disordered region; the sequence is MGCIKSKENKSPAIKYRPENTPEPVSTSVSHYGAEPTTVSPCPSS. A lipid anchor (N-myristoyl glycine) is attached at glycine 2. A lipid anchor (S-palmitoyl cysteine; in membrane form) is attached at cysteine 3. Residue threonine 21 is modified to Phosphothreonine. Tyrosine 32 is subject to Phosphotyrosine. Residue serine 40 is modified to Phosphoserine. The SH3 domain occupies 91–152; the sequence is GGVTIFVALY…PSNYVAPADS (62 aa). The SH2 domain occupies 158-255; it reads WYFGKMGRKD…GLCHKLTTVC (98 aa). The 254-residue stretch at 277–530 folds into the Protein kinase domain; that stretch reads LRLEVKLGQG…YIQSFLEDYF (254 aa). Residues 283-291 and lysine 305 each bind ATP; that span reads LGQGCFGEV. A phosphotyrosine mark is found at tyrosine 336 and tyrosine 345. Aspartate 396 acts as the Proton acceptor in catalysis. Tyrosine 426 is modified (phosphotyrosine; by autocatalysis). Tyrosine 446 carries the phosphotyrosine modification. The residue at position 537 (tyrosine 537) is a Phosphotyrosine; by CSK.

It belongs to the protein kinase superfamily. Tyr protein kinase family. SRC subfamily. In terms of assembly, interacts with YAP1 and CSF1R. Interacts with CTNND1; this interaction allows YES1-mediated activation of FYN and FER and subsequent phosphorylation of CTNND1. Interacts with FASLG. Interacts with IL6ST/gp130. Interacts with SCRIB, when YES1 is in a closed conformation; the interaction facilitates YES1 autophosphorylation. In terms of processing, phosphorylated. Phosphorylation by CSK on the C-terminal tail maintains the enzyme in an inactive state. Autophosphorylation at Tyr-426 maintains enzyme activity by blocking CSK-mediated inhibition. Post-translationally, palmitoylation at Cys-3 promotes membrane localization. In terms of tissue distribution, expressed in the epithelial cells of renal proximal tubules and stomach as well as hematopoietic cells in the bone marrow and spleen in the fetal tissues. In adult, expressed in epithelial cells of the renal proximal tubules and present in keratinocytes in the basal epidermal layer of epidermis.

Its subcellular location is the cell membrane. It localises to the cytoplasm. The protein localises to the cytoskeleton. The protein resides in the microtubule organizing center. It is found in the centrosome. Its subcellular location is the cytosol. It localises to the cell junction. The catalysed reaction is L-tyrosyl-[protein] + ATP = O-phospho-L-tyrosyl-[protein] + ADP + H(+). Its function is as follows. Non-receptor protein tyrosine kinase that is involved in the regulation of cell growth and survival, apoptosis, cell-cell adhesion, cytoskeleton remodeling, and differentiation. Stimulation by receptor tyrosine kinases (RTKs) including EGFR, PDGFR, CSF1R and FGFR leads to recruitment of YES1 to the phosphorylated receptor, and activation and phosphorylation of downstream substrates. Upon EGFR activation, promotes the phosphorylation of PARD3 to favor epithelial tight junction assembly. Participates in the phosphorylation of specific junctional components such as CTNND1 by stimulating the FYN and FER tyrosine kinases at cell-cell contacts. Upon T-cell stimulation by CXCL12, phosphorylates collapsin response mediator protein 2/DPYSL2 and induces T-cell migration. Participates in CD95L/FASLG signaling pathway and mediates AKT-mediated cell migration. Plays a role in cell cycle progression by phosphorylating the cyclin-dependent kinase 4/CDK4 thus regulating the G1 phase. Also involved in G2/M progression and cytokinesis. Catalyzes phosphorylation of organic cation transporter OCT2 which induces its transport activity. This is Tyrosine-protein kinase Yes (YES1) from Homo sapiens (Human).